We begin with the raw amino-acid sequence, 999 residues long: Probable K(+)/H(+) antiporter subunit A/B (999 aa).

The tract at residues 1–20 is disordered; that stretch reads MTRPASVLAGPKSRPPIHSQ. Helical transmembrane passes span 31-48, 63-85, 106-128, 138-160, 162-181, 191-213, 233-255, 270-292, 299-321, 336-358, 389-411, 442-464, 488-510, 530-552, 604-621, 636-653, 660-682, 686-708, 729-751, 788-807, 846-868, 878-900, 913-935, and 955-977; these read LLSVFILVPFAGSLIAIF, AIALVCFLVTAGLYPYVASGGVL, FAWLFSALITAIGVLVALYARYY, FFALFLAFMGSMLGVVLSGNLIL, AVFWELTSIVSFLLIGYWHH, MALTITGTGGLAMFVGLIIIGKI, PLYGTVLVLVLLGALTKSAQFPF, SAYLHSATMVKAGVFLLVRFWPV, WFWIVGLAGLTTLLLGAYFAIFQ, LGLITVLLSLGSPLAAVAAVFHI, GLFHFMPITATLAMVASAAMAGV, YVATIAGMFAVTYSLRFIHGVFF, FLVLACLVVGIIPAQTIGPFLHT, GWNIPLIMSFVALSGGIGLYFLM, RLLVFLALAAGASPLLLG, AFALLWAIGIACAIGSAY, LASLVLLGGAGLVTCITFVWLSA, AVTQLLVEIVTTVLILLGLRWLP, LRDLLLAIGAGGGMMLIAYTVMT, TLGEIAVLCIVALTVFALLL, FIPAVIMRWMFPVTGMLAAFLFL, FAAGIAMSIGFILQYMSGGTRWV, SIGLLVATATGVGSWFFGYPFLT, and ILFDLGVFSLVLGATVLILIALA.

In the N-terminal section; belongs to the CPA3 antiporters (TC 2.A.63) subunit A family. The protein in the C-terminal section; belongs to the CPA3 antiporters (TC 2.A.63) subunit B family. In terms of assembly, may form a heterooligomeric complex that consists of six subunits: PhaAB, PhaC, PhaD, PhaE, PhaF and PhaG.

It is found in the cell membrane. Its function is as follows. Part of a K(+) efflux system which is required for the adaptation of R.meliloti to alkaline pH as well as for the infection process during symbiotic nodule development. This Rhizobium meliloti (strain 1021) (Ensifer meliloti) protein is Probable K(+)/H(+) antiporter subunit A/B (phaAB).